Consider the following 180-residue polypeptide: CASP-like protein XL3 (180 aa).

The Cytoplasmic portion of the chain corresponds to 1-7 (MELSIQK). A helical transmembrane segment spans residues 8–28 (IEALIRLSTIVMLVLTACLIG). The Extracellular portion of the chain corresponds to 29 to 49 (LDSQTKVIFYVQKKASFKDLR). A helical membrane pass occupies residues 50–70 (ALVGLLYITSLAAAYNLLQLC). Over 71–98 (CSSFSASYKGTSLQSYAYLAWLRYILDQ) the chain is Cytoplasmic. A helical membrane pass occupies residues 99–119 (AVVYAVFAGNLAALEHSFLVL). At 120–140 (TGEENFQWLKWCNKYTRFCTQ) the chain is on the extracellular side. The chain crosses the membrane as a helical span at residues 141–161 (IGGSLLCGFVASLLMFSIASI). The Cytoplasmic portion of the chain corresponds to 162–180 (SAFNLFRQYSPTKFMHLKL).

It belongs to the Casparian strip membrane proteins (CASP) family. Homodimer and heterodimers.

It is found in the cell membrane. This chain is CASP-like protein XL3 (XL3), found in Gossypium hirsutum (Upland cotton).